Reading from the N-terminus, the 336-residue chain is Quinolinate synthase (336 aa).

His-25 and Ser-42 together coordinate iminosuccinate. Cys-86 serves as a coordination point for [4Fe-4S] cluster. Residues 117-119 and Ser-138 contribute to the iminosuccinate site; that span reads YIN. Cys-198 is a [4Fe-4S] cluster binding site. Residues 224–226 and Thr-241 contribute to the iminosuccinate site; that span reads HPE. Residue Cys-288 participates in [4Fe-4S] cluster binding.

It belongs to the quinolinate synthase family. Type 3 subfamily. The cofactor is [4Fe-4S] cluster.

The protein resides in the cytoplasm. It carries out the reaction iminosuccinate + dihydroxyacetone phosphate = quinolinate + phosphate + 2 H2O + H(+). Its pathway is cofactor biosynthesis; NAD(+) biosynthesis; quinolinate from iminoaspartate: step 1/1. Its function is as follows. Catalyzes the condensation of iminoaspartate with dihydroxyacetone phosphate to form quinolinate. This is Quinolinate synthase from Helicobacter pylori (strain ATCC 700392 / 26695) (Campylobacter pylori).